We begin with the raw amino-acid sequence, 569 residues long: MVICCAAVNCSNRQGKGEKRAVSFHRFPLKDSKRLIQWLKAVQRDNWTPTKYSFLCSEHFTKDSFSKRLEDQHRLLKPTAVPSIFHLSEKKRGAGGHGHARRKTTAAMRGHTSAETGKGTIGSSLSSSDNLMAKPESRKLKRASPQDDAAPKVTPGAVSQEQGQSLEKTPGDDPAAPLARGQEEAQASATEADHQKASSSTDAEGADKSGISMDDFTPPGSGACKFIGSLHSYSFSSKHTRERPSVPREPMDRKRLKREMEPRCSGNSVAQSPPSSSLTATPQKASQSPSAPPTDVTPKPAAEAVQSEHSDASPMSINEVILSASGACKLIDSLHSYCFSARQNKSQVCCLREQVEKKNGELKSLRQKVSRSDSQVRKLREKLDELRRASLPYLPYLSGLLPPSHEPPKLNPVVEPLSWMLGTWLSDPPGVGTFPTLQPFQYLEEVHISHVGQPMLNFSFNSFHPETHKPMHRECGFIRLKPDTNKVAFVSAQNTGIVEVEEGEVNGQELCVSSHSVSRISFAKEPHVEQITRKFRLNSEGKLEQTVSMATTTQPMTQHLHITYKKVTP.

Residues 1 to 85 (MVICCAAVNC…LKPTAVPSIF (85 aa)) form a THAP-type zinc finger. Positions 88–216 (SEKKRGAGGH…DKSGISMDDF (129 aa)) are disordered. 2 stretches are compositionally biased toward polar residues: residues 121–130 (IGSSLSSSDN) and 157–167 (AVSQEQGQSLE). Position 159 is a phosphoserine (serine 159). The HCFC1-binding motif (HBM) motif lies at 230–233 (LHSY). At serine 234 the chain carries Phosphoserine. Positions 235–312 (FSSKHTRERP…EAVQSEHSDA (78 aa)) are disordered. A compositionally biased stretch (basic and acidic residues) spans 242-262 (ERPSVPREPMDRKRLKREMEP). Positions 265 to 279 (SGNSVAQSPPSSSLT) are enriched in polar residues. Over residues 280 to 289 (ATPQKASQSP) the composition is skewed to low complexity. The nitrobindin stretch occupies residues 407–569 (PPKLNPVVEP…LHITYKKVTP (163 aa)). 2 residues coordinate heme b: threonine 436 and histidine 559.

The protein in the C-terminal section; belongs to the nitrobindin family. As to quaternary structure, homodimer. Heme b serves as cofactor.

The protein localises to the cytoplasm. It localises to the nucleus. It catalyses the reaction peroxynitrite = nitrate. The protein operates within nitrogen metabolism. Heme-binding protein able to scavenge peroxynitrite and to protect free L-tyrosine against peroxynitrite-mediated nitration, by acting as a peroxynitrite isomerase that converts peroxynitrite to nitrate. Therefore, this protein likely plays a role in peroxynitrite sensing and in the detoxification of reactive nitrogen and oxygen species (RNS and ROS, respectively). Is able to bind nitric oxide (NO) in vitro, but may act as a sensor of peroxynitrite levels in vivo, possibly modulating the transcriptional activity residing in the N-terminal region. This Mus musculus (Mouse) protein is Peroxynitrite isomerase THAP4.